The chain runs to 383 residues: Acetyl-CoA acetyltransferase (383 aa).

The active-site Acyl-thioester intermediate is Cys85. Residues Cys206, Ser207, Ile209, and Lys328 each coordinate CoA. His332 serves as the catalytic Proton acceptor.

The protein belongs to the thiolase-like superfamily. Thiolase family. As to quaternary structure, interacts with HMG-CoA synthase (HMGCS) that catalyzes the second step in the pathway and with a DUF35 protein. The acetoacetyl-CoA thiolase/HMG-CoA synthase complex channels the intermediate via a fused CoA-binding site, which allows for efficient coupling of the endergonic thiolase reaction with the exergonic HMGCS reaction.

It carries out the reaction 2 acetyl-CoA = acetoacetyl-CoA + CoA. It participates in metabolic intermediate biosynthesis; (R)-mevalonate biosynthesis; (R)-mevalonate from acetyl-CoA: step 1/3. In terms of biological role, catalyzes the condensation of two acetyl-coA molecules into acetoacetyl-CoA. Functions in the mevalonate (MVA) pathway leading to isopentenyl diphosphate (IPP), a key precursor for the biosynthesis of isoprenoid compounds that are building blocks of archaeal membrane lipids. The sequence is that of Acetyl-CoA acetyltransferase from Methanothermobacter thermautotrophicus (strain ATCC 29096 / DSM 1053 / JCM 10044 / NBRC 100330 / Delta H) (Methanobacterium thermoautotrophicum).